The sequence spans 613 residues: Carotenoid dioxygenase (613 aa).

Residues 1–25 (MSPHEVIGTVPKNSTTFRTQADEHD) form a disordered region. His261, His313, His383, and His595 together coordinate Fe(2+).

This sequence belongs to the carotenoid oxygenase family. Requires Fe(2+) as cofactor.

The protein resides in the cytoplasm. It is found in the cytosol. It carries out the reaction torulene + O2 = 4'-apo-beta-carotenal + 3-methyl-2-butenal. It functions in the pathway carotenoid biosynthesis. Its function is as follows. Torulene dioxygenase; part of pathway that mediates the biosynthesis of neurosporaxanthin, a carboxylic apocarotenoid acting as an essential protective pigments and leading to orange pigmentation. Cao-2 mediates the cleavage of torulene into beta-apo-4'-carotenal, the aldehyde corresponding to the acidic neurosporaxanthin. Is not able to use gamma-carotene (that it is not desaturated at the C4'-C5' bond) as substrate, which suggests a high specificity of cao-2 in cleaving the C4'-C5' double bond. Neurosporaxanthin is synthesized from geranyl-geranyl pyrophosphate (GGPP) through several enzymatic activities. Phytoene synthase activity performed by the bifunctional enzyme al-2 first produces phytoene from geranyl-geranyl pyrophosphate (GGPP). The phytoene dehydrogenase al-1 then introduces 5 desaturations to lead to 3,4-didehydrolycopene via the intermediates phytofluene, zeta-carotene, neurosporene and lycopene. Al-2 cyclase activity then converts 3,4-didehydrolycopene into torulene. Al-2 can also convet lycopene into gamma-carotene which in turn is converted to beta-carotene by an additional al-2 cyclization reaction. Torulene is the substrate of the dioxidase cao-2 that breaks the molecule, removing five carbon atoms to yield beta-apo-4'-carotenal, whereas the aldehyde dehydrogenase ylo-1 mediates the last step by converting beta-apo-4'-carotenal into neurosporaxanthin. This is Carotenoid dioxygenase from Neurospora crassa (strain ATCC 24698 / 74-OR23-1A / CBS 708.71 / DSM 1257 / FGSC 987).